Here is a 246-residue protein sequence, read N- to C-terminus: MVSLTKRCIAEFIGTFFLVFFGAGAAAITLMIASGGTAPNPFNIGIGLLGGLGDWVAIGLAFGFAIAASIYALGNISGCHINPAVTIGLWSVKKFPGRDVVPYIIAQLLGAAFASFIFLQCAGITAATIGGLGATAPFPGIGYWQAMLAETVGTFLLMITIMGIAVDERAPKGFAGIIIGLTVAGIITTIGNITGSSLNPARTFGPYLNDMVFAGTNLWNYFPIYVIGPVVGAVLAALTYQYLTSE.

The Cytoplasmic portion of the chain corresponds to 1 to 11 (MVSLTKRCIAE). Residues 12-32 (FIGTFFLVFFGAGAAAITLMI) form a helical membrane-spanning segment. The Extracellular portion of the chain corresponds to 33-45 (ASGGTAPNPFNIG). A helical transmembrane segment spans residues 46–66 (IGLLGGLGDWVAIGLAFGFAI). Topologically, residues 67-69 (AAS) are cytoplasmic. A helical membrane pass occupies residues 70–90 (IYALGNISGCHINPAVTIGLW). Residues 82–84 (NPA) carry the NPA 1 motif. Topologically, residues 91 to 103 (SVKKFPGRDVVPY) are extracellular. Residues 104–124 (IIAQLLGAAFASFIFLQCAGI) traverse the membrane as a helical segment. The Cytoplasmic segment spans residues 125 to 145 (TAATIGGLGATAPFPGIGYWQ). A helical transmembrane segment spans residues 146–166 (AMLAETVGTFLLMITIMGIAV). The Extracellular portion of the chain corresponds to 167–172 (DERAPK). A helical transmembrane segment spans residues 173 to 193 (GFAGIIIGLTVAGIITTIGNI). Residues 194–217 (TGSSLNPARTFGPYLNDMVFAGTN) are Cytoplasmic-facing. The NPA 2 signature appears at 199–201 (NPA). Residues 218 to 238 (LWNYFPIYVIGPVVGAVLAAL) form a helical membrane-spanning segment. Topologically, residues 239 to 246 (TYQYLTSE) are extracellular.

Belongs to the MIP/aquaporin (TC 1.A.8) family. As to quaternary structure, homotetramer.

The protein localises to the cell membrane. In terms of biological role, channel that permits osmotically driven movement of water in both directions. It mediates rapid entry or exit of water in response to abrupt changes in osmolarity. Also exhibits a transient but reproducible increase in the initial glycerol flux. The polypeptide is Aquaporin AqpM (aqpM) (Methanothermobacter thermautotrophicus (strain ATCC 29096 / DSM 1053 / JCM 10044 / NBRC 100330 / Delta H) (Methanobacterium thermoautotrophicum)).